The following is a 338-amino-acid chain: 1-aminocyclopropane-1-carboxylate deaminase (338 aa).

Lysine 51 bears the N6-(pyridoxal phosphate)lysine mark. The Nucleophile role is filled by serine 78.

Belongs to the ACC deaminase/D-cysteine desulfhydrase family. Homotrimer. Pyridoxal 5'-phosphate is required as a cofactor.

It carries out the reaction 1-aminocyclopropane-1-carboxylate + H2O = 2-oxobutanoate + NH4(+). In terms of biological role, catalyzes a cyclopropane ring-opening reaction, the irreversible conversion of 1-aminocyclopropane-1-carboxylate (ACC) to ammonia and alpha-ketobutyrate. Allows growth on ACC as a nitrogen source. The chain is 1-aminocyclopropane-1-carboxylate deaminase from Paraburkholderia phytofirmans (strain DSM 17436 / LMG 22146 / PsJN) (Burkholderia phytofirmans).